A 427-amino-acid polypeptide reads, in one-letter code: Putative F-box protein At4g10740 (427 aa).

The F-box domain occupies 2–47; the sequence is RTTMSNLPKELVEDIVSRVPLHCLRAMRLTCKNWNALLESQSFKKM.

This chain is Putative F-box protein At4g10740, found in Arabidopsis thaliana (Mouse-ear cress).